A 382-amino-acid chain; its full sequence is Na(+)/H(+) antiporter NhaA 2 (382 aa).

The next 10 helical transmembrane spans lie at 11-31, 45-65, 91-111, 116-136, 145-165, 171-191, 197-214, 287-307, 324-344, and 353-373; these read FSVP…LDPA, LSFH…IAAV, LGGV…VGLP, GWGI…RMVF, YLLL…ALFY, PVVA…WGLG, SYWP…IGLH, WLVL…FGLL, LLVA…VSGS, and AAAK…MLLG.

Belongs to the NhaA Na(+)/H(+) (TC 2.A.33) antiporter family.

It localises to the cell inner membrane. The enzyme catalyses Na(+)(in) + 2 H(+)(out) = Na(+)(out) + 2 H(+)(in). In terms of biological role, na(+)/H(+) antiporter that extrudes sodium in exchange for external protons. The sequence is that of Na(+)/H(+) antiporter NhaA 2 from Pelobacter propionicus (strain DSM 2379 / NBRC 103807 / OttBd1).